A 221-amino-acid chain; its full sequence is Putative NAD(P)H nitroreductase YfkO (221 aa).

Residues 15 to 17 (RHA) and 73 to 75 (QKQ) contribute to the FMN site. Position 157 to 162 (157 to 162 (AAAQIG)) interacts with NAD(+). FMN contacts are provided by residues 169-170 (EG) and Arg-211.

It belongs to the nitroreductase family. As to quaternary structure, monomer. FMN serves as cofactor.

The polypeptide is Putative NAD(P)H nitroreductase YfkO (yfkO) (Bacillus subtilis (strain 168)).